The following is a 289-amino-acid chain: ATP synthase subunit a (289 aa).

The next 6 membrane-spanning stretches (helical) occupy residues 43 to 63, 101 to 121, 160 to 180, 193 to 213, 232 to 252, and 259 to 279; these read AFHV…VLIF, SAVI…MNAV, LSVF…GGFI, IFVQ…TLIA, VFIL…GLGI, and AVFH…LTIV.

This sequence belongs to the ATPase A chain family. In terms of assembly, F-type ATPases have 2 components, CF(1) - the catalytic core - and CF(0) - the membrane proton channel. CF(1) has five subunits: alpha(3), beta(3), gamma(1), delta(1), epsilon(1). CF(0) has three main subunits: a(1), b(2) and c(9-12). The alpha and beta chains form an alternating ring which encloses part of the gamma chain. CF(1) is attached to CF(0) by a central stalk formed by the gamma and epsilon chains, while a peripheral stalk is formed by the delta and b chains.

It localises to the cell inner membrane. Its function is as follows. Key component of the proton channel; it plays a direct role in the translocation of protons across the membrane. This is ATP synthase subunit a from Pseudomonas syringae pv. tomato (strain ATCC BAA-871 / DC3000).